We begin with the raw amino-acid sequence, 246 residues long: Probable cytokinin riboside 5'-monophosphate phosphoribohydrolase LOGL5 (246 aa).

Basic and acidic residues predominate over residues 1 to 10 (MMMENSREQQ). A disordered region spans residues 1 to 28 (MMMENSREQQPESSPANNNSKKKKKKKT). Substrate-binding positions include glutamate 103, 121–122 (RK), 138–144 (GYGTLEE), and threonine 150.

The protein belongs to the LOG family. Expressed in roots and leaves.

The enzyme catalyses N(6)-(dimethylallyl)adenosine 5'-phosphate + H2O = N(6)-dimethylallyladenine + D-ribose 5-phosphate. The catalysed reaction is 9-ribosyl-trans-zeatin 5'-phosphate + H2O = trans-zeatin + D-ribose 5-phosphate. Cytokinin-activating enzyme working in the direct activation pathway. Phosphoribohydrolase that converts inactive cytokinin nucleotides to the biologically active free-base forms. This chain is Probable cytokinin riboside 5'-monophosphate phosphoribohydrolase LOGL5 (LOGL5), found in Oryza sativa subsp. japonica (Rice).